We begin with the raw amino-acid sequence, 2053 residues long: Nonribosomal peptide synthetase pboA (2053 aa).

The interval A16–R402 is adenylation 1. The 77-residue stretch at R503 to R579 folds into the Carrier 1 domain. An O-(pantetheine 4'-phosphoryl)serine modification is found at S540. The tract at residues N611–Q896 is condensation 1. The tract at residues S1034–R1418 is adenylation 2. The region spanning V1515–I1593 is the Carrier 2 domain. S1553 is subject to O-(pantetheine 4'-phosphoryl)serine. The condensation 2 stretch occupies residues N1630–D1981.

This sequence belongs to the NRP synthetase family. Pantetheine 4'-phosphate serves as cofactor.

The protein operates within secondary metabolite biosynthesis. Functionally, nonribosomal peptide synthetase; part of the gene cluster that mediates the biosynthesis of protubonine B, a hydroxylated and diacetylated cyclo-L-Trp-L-Leu derivative. The first step of the protubonine B synthesis is performed by the nonribosomal peptide synthetase pboA that catalyzes the formation of cyclo-L-Trp-L-Leu by condensing L-Leu with L-Trp. The flavin-dependent monooxygenase pboD is responsible for hydroxylation at C-3 of the indole ring and subsequent formation of the pyrrolidine ring, leadind to protubonine D. Protubonine D is further diacetylated by two acetyltransferases, pboB and pboC, to form the final product protubonine B via protubonine C. The chain is Nonribosomal peptide synthetase pboA from Aspergillus ustus.